The chain runs to 115 residues: Large ribosomal subunit protein bL19 (115 aa).

The protein belongs to the bacterial ribosomal protein bL19 family.

Functionally, this protein is located at the 30S-50S ribosomal subunit interface and may play a role in the structure and function of the aminoacyl-tRNA binding site. The chain is Large ribosomal subunit protein bL19 from Fervidobacterium nodosum (strain ATCC 35602 / DSM 5306 / Rt17-B1).